The chain runs to 343 residues: Probable potassium channel protein 2 (343 aa).

Residues 1–7 (METSKKL) are Cytoplasmic-facing. A helical transmembrane segment spans residues 8-28 (VIVAVLSITLILTYAYLISII). Topologically, residues 29-61 (EGVDYFTALYFSVITITTTGYGDFTPKTFLGRT) are extracellular. A Selectivity filter motif is present at residues 46–51 (TTGYGD). The helical transmembrane segment at 62-82 (LTVVYLCVGVGIVMYLFSLIA) threads the bilayer. Over 83-343 (EFIVEGKFEE…NLVKKKKKKL (261 aa)) the chain is Cytoplasmic. Residues 107–227 (KDHYIICGYG…KIAGANRVVS (121 aa)) form the RCK N-terminal domain. One can recognise an RCK C-terminal domain in the interval 253–338 (IKIAKDEYEE…LKYLENLVKK (86 aa)).

It localises to the cell membrane. In terms of biological role, probable potassium channel protein. The chain is Probable potassium channel protein 2 from Methanocaldococcus jannaschii (strain ATCC 43067 / DSM 2661 / JAL-1 / JCM 10045 / NBRC 100440) (Methanococcus jannaschii).